Consider the following 200-residue polypeptide: Vacuolar iron transporter homolog 1 (200 aa).

The Cytoplasmic portion of the chain corresponds to 1-34; that stretch reads MESHNVSNSLNLDMEMDQEKAFDYSKRAQWLRAA. The chain crosses the membrane as a helical span at residues 35–55; sequence VLGANDGLVSTASLMMGVGAV. Over 56–62 the chain is Vacuolar; the sequence is KQDVKVM. A helical membrane pass occupies residues 63–83; sequence ILSGFAGLVAGACSMAIGEFV. Residues 84 to 116 are Cytoplasmic-facing; it reads SVYSQYDIEVAQMKRENGGQVEKEKLPSPMQAA. A helical transmembrane segment spans residues 117-137; it reads AASALAFSLGAIVPLMAAAFV. The Vacuolar portion of the chain corresponds to 138–143; that stretch reads KDYHVR. The chain crosses the membrane as a helical span at residues 144–164; that stretch reads IGAIVAAVTLALVMFGWLGAV. The Cytoplasmic portion of the chain corresponds to 165–176; the sequence is LGKAPVFKSSAR. The chain crosses the membrane as a helical span at residues 177 to 197; the sequence is VLIGGWLAMAVTFGLTKLIGT. The Vacuolar portion of the chain corresponds to 198–200; that stretch reads HSL.

Belongs to the CCC1 family. As to expression, expressed in the vascular bundles of the shoot and the stele of the root. Expressed in inflorescences and at lower levels in leaves.

It localises to the vacuole membrane. The catalysed reaction is Fe(2+)(in) = Fe(2+)(out). Functionally, vacuolar iron transporter involved in the transfer of iron ions from the cytosol to the vacuole for intracellular iron storage. Involved in regulation of cellular iron homeostasis. Vacuolar iron storage is required for seed embryo and seedling development. The protein is Vacuolar iron transporter homolog 1 of Arabidopsis thaliana (Mouse-ear cress).